Reading from the N-terminus, the 344-residue chain is Short chain dehydrogenase/reductase mfmJ (344 aa).

The NADP(+) site is built by Leu-51, Lys-76, Asp-99, Asn-126, Tyr-213, and Lys-217. Tyr-213 (proton donor) is an active-site residue. Lys-217 (lowers pKa of active site Tyr) is an active-site residue.

This sequence belongs to the short-chain dehydrogenases/reductases (SDR) family.

Its function is as follows. Short chain dehydrogenase/reductase; part of the gene cluster that mediates the biosynthesis of the phthalide-terpenoid hybrid 11'-O-desmethylfendlerol. MfmJ seems not to be involved directly in the biosynthesis of 11'-O-desmethylfendlerol and its role has still to be determined. The biosynthesis of 11'-O-desmethylfendlerol begins with the NR-PKS mfmB that forms 3,5-dimethylorsellinic acid (DMOA), which is then transformed into the phthalide 5,7-dihydroxy-4-(hydroxymethyl)-6-methylphthalide by the cytochrome P450 monooxygenase mfmA and the hydrolase mfmC. Subsequently, the methyltransferase mfmE catalyzes 7-O-methylation to yield 5-hydroxy-4-(hydroxymethyl)-7-methoxy-6-methylphthalide, which undergoes C-3 hydroxylation by the cytochrome P450 monooxygenase mfmF. The resultant cyclopolic acid (2,5-dihydroxy-4-(hydroxymethyl)-7-methoxy-6-methylphthalide) is then farnesylated by the DMATS-type prenyltransferase mfmD to afford 5-O-farnesylcyclopolic acid. Finally, the Pyr4-family terpene cyclase mfmH cyclizes the farnesyl moiety of 5-O-farnesylcyclopolic acid into a drimane-like structure, thus completing the biosynthesis of 11'-O-desmethylfendlerol. This Annulohypoxylon moriforme (Filamentous fungus) protein is Short chain dehydrogenase/reductase mfmJ.